A 357-amino-acid chain; its full sequence is Phosphoribosylformylglycinamidine cyclo-ligase (357 aa).

The protein belongs to the AIR synthase family.

It localises to the cytoplasm. It catalyses the reaction 2-formamido-N(1)-(5-O-phospho-beta-D-ribosyl)acetamidine + ATP = 5-amino-1-(5-phospho-beta-D-ribosyl)imidazole + ADP + phosphate + H(+). It participates in purine metabolism; IMP biosynthesis via de novo pathway; 5-amino-1-(5-phospho-D-ribosyl)imidazole from N(2)-formyl-N(1)-(5-phospho-D-ribosyl)glycinamide: step 2/2. This is Phosphoribosylformylglycinamidine cyclo-ligase from Rhodopseudomonas palustris (strain ATCC BAA-98 / CGA009).